We begin with the raw amino-acid sequence, 114 residues long: Putative antiporter subunit mnhC2 (114 aa).

The next 3 membrane-spanning stretches (helical) occupy residues 3-23, 28-48, and 72-92; these read LILLLVIGFLVFIGTYMILSI, IVIGISIYTHAGNLIIMSMGT, and AIVLTAIVIGFGMTAFLLVLV.

The protein belongs to the CPA3 antiporters (TC 2.A.63) subunit C family. As to quaternary structure, may form a heterooligomeric complex that consists of seven subunits: mnhA2, mnhB2, mnhC2, mnhD2, mnhE2, mnhF2 and mnhG2.

The protein localises to the cell membrane. The protein is Putative antiporter subunit mnhC2 (mnhC2) of Staphylococcus aureus (strain MRSA252).